We begin with the raw amino-acid sequence, 371 residues long: N-acetyldiaminopimelate deacetylase (371 aa).

Asp-68 is a catalytic residue. The Proton acceptor role is filled by Glu-127.

This sequence belongs to the peptidase M20A family. N-acetyldiaminopimelate deacetylase subfamily.

It catalyses the reaction N-acetyl-(2S,6S)-2,6-diaminopimelate + H2O = (2S,6S)-2,6-diaminopimelate + acetate. It functions in the pathway amino-acid biosynthesis; L-lysine biosynthesis via DAP pathway; LL-2,6-diaminopimelate from (S)-tetrahydrodipicolinate (acetylase route): step 3/3. Catalyzes the conversion of N-acetyl-diaminopimelate to diaminopimelate and acetate. The sequence is that of N-acetyldiaminopimelate deacetylase from Halalkalibacterium halodurans (strain ATCC BAA-125 / DSM 18197 / FERM 7344 / JCM 9153 / C-125) (Bacillus halodurans).